Consider the following 287-residue polypeptide: uncharacterized protein (287 aa).

Residues 43 to 50 (GKTGVGKS), 90 to 93 (DLPG), and 156 to 159 (DKAE) contribute to the GTP site. Residues 48 to 138 (GKSSLCNALF…LTVDEHFYHQ (91 aa)) form the G domain.

The protein to E.coli YfjP and YeeP.

This is an uncharacterized protein from Escherichia coli (strain K12).